The chain runs to 122 residues: HLMQFETLIKKIAGRSGVWFYGFYGCYCGSGGRGKPKDATDRCCFVHDCCYGKVTGCDPKMDFYTYSEENGVVVCGGDDPCKKQICECDRVAATCFRDNKTYDNNKYWFYPAKNCQEESEPC.

7 cysteine pairs are disulfide-bonded: Cys26–Cys115, Cys28–Cys44, Cys43–Cys95, Cys49–Cys122, Cys50–Cys88, Cys57–Cys81, and Cys75–Cys86. Residues Tyr27, Gly29, and Gly31 each coordinate Ca(2+). His47 is an active-site residue. Residue Asp48 participates in Ca(2+) binding. The active site involves Asp89.

Belongs to the phospholipase A2 family. Group II subfamily. D49 sub-subfamily. Ca(2+) serves as cofactor. Post-translationally, contains 7 disulfide bonds. As to expression, expressed by the venom gland.

It is found in the secreted. It carries out the reaction a 1,2-diacyl-sn-glycero-3-phosphocholine + H2O = a 1-acyl-sn-glycero-3-phosphocholine + a fatty acid + H(+). Its function is as follows. Snake venom phospholipase A2 (PLA2) that displays low systemic toxicity and causes severe symptoms only at very high concentrations (15 mg/kg). Has neither coagulant nor anticoagulant activity. PLA2 catalyzes the calcium-dependent hydrolysis of the 2-acyl groups in 3-sn-phosphoglycerides. The protein is Acidic phospholipase A2 of Bothrops ammodytoides (Yararanata).